We begin with the raw amino-acid sequence, 182 residues long: ATP-dependent protease subunit HslV (182 aa).

Threonine 12 is a catalytic residue. Residues alanine 167, cysteine 170, and threonine 173 each coordinate Na(+).

This sequence belongs to the peptidase T1B family. HslV subfamily. In terms of assembly, a double ring-shaped homohexamer of HslV is capped on each side by a ring-shaped HslU homohexamer. The assembly of the HslU/HslV complex is dependent on binding of ATP.

Its subcellular location is the cytoplasm. It catalyses the reaction ATP-dependent cleavage of peptide bonds with broad specificity.. Its activity is regulated as follows. Allosterically activated by HslU binding. Functionally, protease subunit of a proteasome-like degradation complex believed to be a general protein degrading machinery. The chain is ATP-dependent protease subunit HslV from Chlorobium luteolum (strain DSM 273 / BCRC 81028 / 2530) (Pelodictyon luteolum).